A 266-amino-acid polypeptide reads, in one-letter code: MARSALLNVMVQAAMKAGRSLSRDFGEVQNLQVSLKGPGDYVSQADRKAEDIIFAELSKARPGYGFLMEERGAVEGEDSQHRWIVDPLDGTTNFLHGIPLFAVSIALERQGQIVAGVIYNPAMDELYTTERGGGAFMNDRRLRVAGRIKLVDTVIGCGMPHLGRGHHGNFLVELRNVMAEVSGVRRLGSAALDLAYVAAGRMDGFWETGLSAWDIAAGLLLIREAGGFVSDMDGGQDMLDNGSVVAGNEVIQRALLKAVKKPLSAR.

Glutamate 69, aspartate 86, leucine 88, and aspartate 89 together coordinate Mg(2+). Residue glutamate 69 coordinates substrate. Substrate-binding positions include 88–91 (LDGT), arginine 185, and aspartate 214. Aspartate 214 lines the Mg(2+) pocket.

It belongs to the inositol monophosphatase superfamily. The cofactor is Mg(2+).

It carries out the reaction a myo-inositol phosphate + H2O = myo-inositol + phosphate. This chain is Inositol-1-monophosphatase (suhB), found in Mesorhizobium japonicum (strain LMG 29417 / CECT 9101 / MAFF 303099) (Mesorhizobium loti (strain MAFF 303099)).